The following is a 203-amino-acid chain: MYEYFLGQVTDVTPGYVVIEVSGIGYKVLTANPYRYQVGPTAVKMYIHQAVSENGMSLFGFFDADEKALFEKLLGVSGIGPKSALAILANNDHAGLIQAINQENATYLTSFPGVGKKTAQQIVLDLKGKLNDLNVDVTGQTALDVDAPAVDGALADALAALEALGYSKADVKKVTKKLETFSQTQGADTNTLLSEGLRLLMKK.

The tract at residues 1–62 is domain I; sequence MYEYFLGQVT…ENGMSLFGFF (62 aa). The domain II stretch occupies residues 63–141; sequence DADEKALFEK…DLNVDVTGQT (79 aa). Residues 142–148 are flexible linker; it reads ALDVDAP. The tract at residues 149-203 is domain III; the sequence is AVDGALADALAALEALGYSKADVKKVTKKLETFSQTQGADTNTLLSEGLRLLMKK.

It belongs to the RuvA family. Homotetramer. Forms an RuvA(8)-RuvB(12)-Holliday junction (HJ) complex. HJ DNA is sandwiched between 2 RuvA tetramers; dsDNA enters through RuvA and exits via RuvB. An RuvB hexamer assembles on each DNA strand where it exits the tetramer. Each RuvB hexamer is contacted by two RuvA subunits (via domain III) on 2 adjacent RuvB subunits; this complex drives branch migration. In the full resolvosome a probable DNA-RuvA(4)-RuvB(12)-RuvC(2) complex forms which resolves the HJ.

Its subcellular location is the cytoplasm. The RuvA-RuvB-RuvC complex processes Holliday junction (HJ) DNA during genetic recombination and DNA repair, while the RuvA-RuvB complex plays an important role in the rescue of blocked DNA replication forks via replication fork reversal (RFR). RuvA specifically binds to HJ cruciform DNA, conferring on it an open structure. The RuvB hexamer acts as an ATP-dependent pump, pulling dsDNA into and through the RuvAB complex. HJ branch migration allows RuvC to scan DNA until it finds its consensus sequence, where it cleaves and resolves the cruciform DNA. This chain is Holliday junction branch migration complex subunit RuvA, found in Lactiplantibacillus plantarum (strain ATCC BAA-793 / NCIMB 8826 / WCFS1) (Lactobacillus plantarum).